Here is a 243-residue protein sequence, read N- to C-terminus: MKQAIESFIQSKKVSVNSQKSYTYDLQQFVTVTKGEISQQSLLVYQQSLLDLKPAAQKRKMSAVNQFLYFLYENNLLDRFYKLQTTSGPASVKKKLEREDLTLLFQESPWLEGQLIALLIAYLGLTPSEIAELTSQQVNLDFQVLTVEKGGAKRVLTLPKELIPYMESHLSGRYVFDKKGQTYSRQWFFNRLTEFVQSIGKPDWTAQKLREQYILKQIDEGKSLDQIAKQLGLKTSMSLEKFR.

The Core-binding (CB) domain maps to 1 to 72 (MKQAIESFIQ…AVNQFLYFLY (72 aa)). The Tyr recombinase domain maps to 91–243 (SVKKKLERED…KTSMSLEKFR (153 aa)). Active-site residues include Lys-149 and Arg-210.

This sequence belongs to the 'phage' integrase family. XerD-like subfamily.

It is found in the cytoplasm. Functionally, putative tyrosine recombinase. Not involved in the cutting and rejoining of the recombining DNA molecules on dif(SL) site. This chain is Tyrosine recombinase XerD-like, found in Streptococcus suis (strain 98HAH33).